The primary structure comprises 247 residues: ATP synthase subunit a, chloroplastic (247 aa).

5 consecutive transmembrane segments (helical) span residues 38–58 (QVLI…IIAV), 95–115 (VPFI…GALL), 134–154 (INTT…AGLS), 199–219 (LVVV…VMFL), and 220–240 (GLFT…AYIG).

Belongs to the ATPase A chain family. F-type ATPases have 2 components, CF(1) - the catalytic core - and CF(0) - the membrane proton channel. CF(1) has five subunits: alpha(3), beta(3), gamma(1), delta(1), epsilon(1). CF(0) has four main subunits: a, b, b' and c.

It localises to the plastid. It is found in the chloroplast thylakoid membrane. In terms of biological role, key component of the proton channel; it plays a direct role in the translocation of protons across the membrane. In Oryza sativa subsp. indica (Rice), this protein is ATP synthase subunit a, chloroplastic.